The sequence spans 215 residues: 3-demethoxyubiquinol 3-hydroxylase (215 aa).

The Fe cation site is built by Glu64, Glu94, His97, Glu146, Glu178, and His181.

This sequence belongs to the COQ7 family. Fe cation is required as a cofactor.

The protein resides in the cell membrane. It catalyses the reaction a 5-methoxy-2-methyl-3-(all-trans-polyprenyl)benzene-1,4-diol + AH2 + O2 = a 3-demethylubiquinol + A + H2O. Its pathway is cofactor biosynthesis; ubiquinone biosynthesis. Catalyzes the hydroxylation of 2-nonaprenyl-3-methyl-6-methoxy-1,4-benzoquinol during ubiquinone biosynthesis. This chain is 3-demethoxyubiquinol 3-hydroxylase, found in Bordetella avium (strain 197N).